The primary structure comprises 93 residues: Exodeoxyribonuclease 7 small subunit (93 aa).

A compositionally biased stretch (basic and acidic residues) spans 61 to 75; sequence IDDNGDEKVYEKQTD. The interval 61-93 is disordered; that stretch reads IDDNGDEKVYEKQTDDPSNNGGGNRGFGSADEQ.

The protein belongs to the XseB family. In terms of assembly, heterooligomer composed of large and small subunits.

The protein localises to the cytoplasm. It carries out the reaction Exonucleolytic cleavage in either 5'- to 3'- or 3'- to 5'-direction to yield nucleoside 5'-phosphates.. Bidirectionally degrades single-stranded DNA into large acid-insoluble oligonucleotides, which are then degraded further into small acid-soluble oligonucleotides. In Limosilactobacillus reuteri (strain DSM 20016) (Lactobacillus reuteri), this protein is Exodeoxyribonuclease 7 small subunit.